The primary structure comprises 207 residues: Probable glutathione S-transferase 5 (207 aa).

Residues 2–81 (VSYKLTYFNG…FLAREFKLNG (80 aa)) enclose the GST N-terminal domain. Residues Y8, W39, K43, 51–53 (GQL), and 65–66 (QS) each bind glutathione. Residues 83–207 (TAWEEAQVNS…WIETRPVTPF (125 aa)) form the GST C-terminal domain.

This sequence belongs to the GST superfamily. Sigma family.

The catalysed reaction is RX + glutathione = an S-substituted glutathione + a halide anion + H(+). In terms of biological role, conjugation of reduced glutathione to a wide number of exogenous and endogenous hydrophobic electrophiles. May play a role in the detoxification of reactive oxygen species produced during pathogenic bacterial infection. The sequence is that of Probable glutathione S-transferase 5 (gst-5) from Caenorhabditis elegans.